A 247-amino-acid polypeptide reads, in one-letter code: DNA polymerase sliding clamp (247 aa).

This sequence belongs to the PCNA family. As to quaternary structure, homotrimer. The subunits circularize to form a toroid; DNA passes through its center. Replication factor C (RFC) is required to load the toroid on the DNA.

In terms of biological role, sliding clamp subunit that acts as a moving platform for DNA processing. Responsible for tethering the catalytic subunit of DNA polymerase and other proteins to DNA during high-speed replication. The protein is DNA polymerase sliding clamp of Methanocorpusculum labreanum (strain ATCC 43576 / DSM 4855 / Z).